Reading from the N-terminus, the 202-residue chain is MSGSGSRPGDSRPGDSRPGDSRPGVRIGVDVGSVRVGVAASDPGGVLAVPVTTLARDRRGNADIDQLVLIVRERQAVEVVVGLPRQMSGQEGRAVRLVRQYAEVLAERIAPVPVRFVDERLTTVAAHRRMAERGVRSRARRSLVDQEAAVQILQHDLDSRRGSAAPGVIGCAAPAAGPDGVVRAPRDGPRAPDGVVPPSDER.

Disordered regions lie at residues 1–27 (MSGSGSRPGDSRPGDSRPGDSRPGVRI) and 170–202 (GCAAPAAGPDGVVRAPRDGPRAPDGVVPPSDER). The span at 9 to 20 (GDSRPGDSRPGD) shows a compositional bias: basic and acidic residues.

It belongs to the YqgF nuclease family.

The protein resides in the cytoplasm. Its function is as follows. Could be a nuclease involved in processing of the 5'-end of pre-16S rRNA. In Frankia casuarinae (strain DSM 45818 / CECT 9043 / HFP020203 / CcI3), this protein is Putative pre-16S rRNA nuclease.